Here is a 126-residue protein sequence, read N- to C-terminus: Aspartate 1-decarboxylase (126 aa).

Catalysis depends on Ser25, which acts as the Schiff-base intermediate with substrate; via pyruvic acid. Ser25 is modified (pyruvic acid (Ser)). Thr57 provides a ligand contact to substrate. Tyr58 serves as the catalytic Proton donor. 73-75 is a binding site for substrate; the sequence is GAA.

It belongs to the PanD family. In terms of assembly, heterooctamer of four alpha and four beta subunits. Pyruvate is required as a cofactor. Is synthesized initially as an inactive proenzyme, which is activated by self-cleavage at a specific serine bond to produce a beta-subunit with a hydroxyl group at its C-terminus and an alpha-subunit with a pyruvoyl group at its N-terminus.

The protein localises to the cytoplasm. It catalyses the reaction L-aspartate + H(+) = beta-alanine + CO2. The protein operates within cofactor biosynthesis; (R)-pantothenate biosynthesis; beta-alanine from L-aspartate: step 1/1. Its function is as follows. Catalyzes the pyruvoyl-dependent decarboxylation of aspartate to produce beta-alanine. The sequence is that of Aspartate 1-decarboxylase from Pseudomonas fluorescens.